Here is a 401-residue protein sequence, read N- to C-terminus: Probable tRNA sulfurtransferase (401 aa).

One can recognise a THUMP domain in the interval Glu60–Asp165. ATP is bound by residues Met183–Leu184, His208–Phe209, Arg265, Gly287, and Gln296.

It belongs to the ThiI family.

It localises to the cytoplasm. The catalysed reaction is [ThiI sulfur-carrier protein]-S-sulfanyl-L-cysteine + a uridine in tRNA + 2 reduced [2Fe-2S]-[ferredoxin] + ATP + H(+) = [ThiI sulfur-carrier protein]-L-cysteine + a 4-thiouridine in tRNA + 2 oxidized [2Fe-2S]-[ferredoxin] + AMP + diphosphate. It carries out the reaction [ThiS sulfur-carrier protein]-C-terminal Gly-Gly-AMP + S-sulfanyl-L-cysteinyl-[cysteine desulfurase] + AH2 = [ThiS sulfur-carrier protein]-C-terminal-Gly-aminoethanethioate + L-cysteinyl-[cysteine desulfurase] + A + AMP + 2 H(+). The protein operates within cofactor biosynthesis; thiamine diphosphate biosynthesis. In terms of biological role, catalyzes the ATP-dependent transfer of a sulfur to tRNA to produce 4-thiouridine in position 8 of tRNAs, which functions as a near-UV photosensor. Also catalyzes the transfer of sulfur to the sulfur carrier protein ThiS, forming ThiS-thiocarboxylate. This is a step in the synthesis of thiazole, in the thiamine biosynthesis pathway. The sulfur is donated as persulfide by IscS. In Bacillus subtilis (strain 168), this protein is Probable tRNA sulfurtransferase.